We begin with the raw amino-acid sequence, 551 residues long: Putative ABC transporter ATP-binding protein BT9727_3105 (551 aa).

ABC transporter domains follow at residues alanine 5–phenylalanine 243 and leucine 293–arginine 525. ATP contacts are provided by residues glycine 39 to threonine 46 and glycine 327 to serine 334.

The protein belongs to the ABC transporter superfamily.

The protein localises to the cell membrane. Functionally, probably part of an ABC transporter complex. Responsible for energy coupling to the transport system. This is Putative ABC transporter ATP-binding protein BT9727_3105 from Bacillus thuringiensis subsp. konkukian (strain 97-27).